Here is a 118-residue protein sequence, read N- to C-terminus: UPF0251 protein Teth39_0655 (118 aa).

The protein belongs to the UPF0251 family.

This Thermoanaerobacter pseudethanolicus (strain ATCC 33223 / 39E) (Clostridium thermohydrosulfuricum) protein is UPF0251 protein Teth39_0655.